We begin with the raw amino-acid sequence, 562 residues long: uncharacterized protein (562 aa).

This is an uncharacterized protein from Escherichia coli (strain K12).